Reading from the N-terminus, the 646-residue chain is A-kinase anchor protein 8-like (646 aa).

A sufficient for activation of CTE-mediated expression region spans residues 1–268; sequence MSYTGFVQGS…MRRTWKTWTT (268 aa). The residue at position 208 (R208) is an Asymmetric dimethylarginine; alternate. The residue at position 208 (R208) is an Omega-N-methylarginine; alternate. Residues R217, R237, and R247 each carry the omega-N-methylarginine modification. Position 257 is an N6-acetyllysine (K257). A disordered region spans residues 264–381; that stretch reads KTWTTADFRT…QDKQKKRQRD (118 aa). T267 is modified (phosphothreonine). Positions 274–279 match the Nuclear localization signal motif; it reads KKKKRK. Residues 280–296 carry the Nuclear export signal (NES) motif; sequence QGGSPDEPDSKATRTDC. Phosphoserine is present on S283. Residues 287-296 show a composition bias toward basic and acidic residues; that stretch reads PDSKATRTDC. Phosphothreonine is present on T292. Residue S297 is modified to Phosphoserine. The span at 298–314 shows a compositional bias: acidic residues; it reads DNSDSDNDEGTEGEATE. The segment covering 337 to 349 has biased composition (basic and acidic residues); it reads EDGREEGKEDPEK. A Nuclear localization signal motif is present at residues 362–364; sequence KRK. 2 consecutive C2H2 AKAP95-type zinc fingers follow at residues 391-413 and 484-507; these read CSLC…SKFH and CAAC…TMDH. Positions 545 to 646 are disordered; that stretch reads GENPFTDSPE…DDEEGGGGAP (102 aa). Residue S552 is modified to Phosphoserine. The segment covering 552–563 has biased composition (acidic residues); the sequence is SPEEEKEQEEAE. Residues 564 to 586 show a composition bias toward low complexity; that stretch reads GGALDEGAQGEAAGISEGAEGVP. The span at 587–607 shows a compositional bias: pro residues; that stretch reads AQPPVPPEPAPGAVSPPPPPP. Residues 634 to 646 show a composition bias toward acidic residues; that stretch reads DVEDDEEGGGGAP.

It belongs to the AKAP95 family. As to quaternary structure, interacts (via N-terminus) with DHX9 (via RGG region). Interacts with TMPO isoform Beta, PRPF40A, RNF43, lamin-B. Interacts with HDAC3; increased during mitosis. Interacts with EBV EBNA-LP. Interacts with HIV-1 reverse transcriptase/ribonuclease H. Post-translationally, phosphorylated on serine or threonine residues possibly by PKA; probably modulating the interaction with TMPO isoform Beta. In terms of tissue distribution, ubiquitously expressed. Expressed in the brain cortex (at protein level).

It is found in the nucleus. It localises to the nucleus matrix. The protein localises to the nucleus speckle. Its subcellular location is the PML body. The protein resides in the cytoplasm. Its function is as follows. Could play a role in constitutive transport element (CTE)-mediated gene expression by association with DHX9. Increases CTE-dependent nuclear unspliced mRNA export. Proposed to target PRKACA to the nucleus but does not seem to be implicated in the binding of regulatory subunit II of PKA. May be involved in nuclear envelope breakdown and chromatin condensation. May be involved in anchoring nuclear membranes to chromatin in interphase and in releasing membranes from chromating at mitosis. May regulate the initiation phase of DNA replication when associated with TMPO isoform Beta. Required for cell cycle G2/M transition and histone deacetylation during mitosis. In mitotic cells recruits HDAC3 to the vicinity of chromatin leading to deacetylation and subsequent phosphorylation at 'Ser-10' of histone H3; in this function seems to act redundantly with AKAP8. May be involved in regulation of pre-mRNA splicing. In terms of biological role, (Microbial infection) In case of EBV infection, may target PRKACA to EBNA-LP-containing nuclear sites to modulate transcription from specific promoters. (Microbial infection) Can synergize with DHX9 to activate the CTE-mediated gene expression of type D retroviruses. Functionally, (Microbial infection) In case of HIV-1 infection, involved in the DHX9-promoted annealing of host tRNA(Lys3) to viral genomic RNA as a primer in reverse transcription; in vitro negatively regulates DHX9 annealing activity. This Homo sapiens (Human) protein is A-kinase anchor protein 8-like (AKAP8L).